The chain runs to 130 residues: MRLPYVFAATMATLLVSSNALVNSNQAMLSSPNEQHQRQLRSHQTPVEDQEPDEERSLSKAEMKRLFEAGNSLDDFAKHLGIADDVVRAQSSNTVLQRLMQTDEYMKYSTYLNFLSKQNKKKKPPTFYHL.

A signal peptide spans 1–20 (MRLPYVFAATMATLLVSSNA). Residues 27–58 (AMLSSPNEQHQRQLRSHQTPVEDQEPDEERSL) are disordered. The RxLR-dEER motif lies at 38–56 (RQLRSHQTPVEDQEPDEER).

Belongs to the RxLR effector family.

It is found in the secreted. The protein localises to the host nucleus. It localises to the host cytoplasm. In terms of biological role, effector that enhances P.infestans colonization of Nicotiana benthamiana leaves. The protein is RxLR effector protein PITG_14783 of Phytophthora infestans (strain T30-4) (Potato late blight agent).